The following is a 101-amino-acid chain: Urease subunit beta (101 aa).

Belongs to the urease beta subunit family. Heterotrimer of UreA (gamma), UreB (beta) and UreC (alpha) subunits. Three heterotrimers associate to form the active enzyme.

It is found in the cytoplasm. The catalysed reaction is urea + 2 H2O + H(+) = hydrogencarbonate + 2 NH4(+). The protein operates within nitrogen metabolism; urea degradation; CO(2) and NH(3) from urea (urease route): step 1/1. The protein is Urease subunit beta of Dechloromonas aromatica (strain RCB).